Here is a 337-residue protein sequence, read N- to C-terminus: UDP-N-acetylenolpyruvoylglucosamine reductase (337 aa).

The FAD-binding PCMH-type domain maps to 16–187; sequence ALPGRAARYQ…TSVIFRLAKA (172 aa). The active site involves R160. S237 (proton donor) is an active-site residue. E333 is a catalytic residue.

The cofactor is FAD.

It localises to the cytoplasm. The catalysed reaction is UDP-N-acetyl-alpha-D-muramate + NADP(+) = UDP-N-acetyl-3-O-(1-carboxyvinyl)-alpha-D-glucosamine + NADPH + H(+). It participates in cell wall biogenesis; peptidoglycan biosynthesis. In terms of biological role, cell wall formation. The protein is UDP-N-acetylenolpyruvoylglucosamine reductase of Dechloromonas aromatica (strain RCB).